We begin with the raw amino-acid sequence, 383 residues long: MASILALDGLYAEVPKFLPEALREGCAGKNPLSFYIQQILNLMGCDGNEYHVLFTGSSEEANTHMIMAAVRRHLLRTQQRPHVIIGAAEPPSVTECVKALAQEKRCVYTIIPLKNFEIDPVAVYDAIQSNTCLACISGTNAVVKTFNKLQDISKVLKGIPLHSEVSELVYQGCIKQNPPADSFSINSLYGFLGVGVLGMKKKVMQGLGPLIFGGGLRGGSPNIPGIHAMYRTLTQQRPSMKKINTIHKLFMKTLKKHQHVYLPIGGVSAEDTSAENISTKDIPVEGPKELPGYILFSVGRRAEELQKKIFTKFNIKVGRIVDLQEILFRIKIPQKYWETLLFIQLRDNLTKEDIKRVMVVLMHLDTITPRGSLPPPSYSSSFS.

Residues 58 to 59 (SE) and 184 to 186 (SIN) each bind pyridoxal 5'-phosphate.

Belongs to the class-V pyridoxal-phosphate-dependent aminotransferase family. NifS/IscS subfamily. Pyridoxal 5'-phosphate is required as a cofactor.

It is found in the virion. This chain is NifS-like protein, found in African swine fever virus (strain Badajoz 1971 Vero-adapted) (Ba71V).